Reading from the N-terminus, the 389-residue chain is Protein IQ-domain 26 (389 aa).

IQ domains follow at residues 106-134 (ERWA…GLVK) and 135-157 (LQAL…SMQA). Residues 137 to 151 (ALVRGYLVRKRAAET) form a calmodulin-binding region. A disordered region spans residues 347-374 (SVSGVRMVQPQPQPQTQTQQQKRSPCSY).

Belongs to the IQD family. As to quaternary structure, binds to multiple calmodulin (CaM) in the presence of Ca(2+) and CaM-like proteins.

Its subcellular location is the cell membrane. It is found in the cytoplasm. The protein resides in the cytoskeleton. Functionally, may be involved in cooperative interactions with calmodulins or calmodulin-like proteins. Recruits calmodulin proteins to microtubules, thus being a potential scaffold in cellular signaling and trafficking. May associate with nucleic acids and regulate gene expression at the transcriptional or post-transcriptional level. In Arabidopsis thaliana (Mouse-ear cress), this protein is Protein IQ-domain 26.